The chain runs to 334 residues: HTH-type transcriptional repressor PurR (334 aa).

An HTH lacI-type domain is found at 2–56 (ATIKDVARLAGVSTTTVSHVINKTRFVAEATQEKVNKAVDELNYAPSAVARSLKC). A DNA-binding region (H-T-H motif) is located at residues 4-23 (IKDVARLAGVSTTTVSHVIN). A DNA-binding region spans residues 48–56 (SAVARSLKC). 4 residues coordinate hypoxanthine: F73, K189, F220, and D274.

Homodimer.

It functions in the pathway purine metabolism; purine nucleotide biosynthesis [regulation]. In terms of biological role, is the main repressor of the genes involved in the de novo synthesis of purine nucleotides, regulating purB, purC, purEK, purF, purHD, purL, purMN and guaBA expression. PurR is allosterically activated to bind its cognate DNA by binding the purine corepressors, hypoxanthine or guanine, thereby effecting transcription repression. The polypeptide is HTH-type transcriptional repressor PurR (Vibrio atlanticus (strain LGP32) (Vibrio splendidus (strain Mel32))).